The following is a 211-amino-acid chain: ATP-dependent dethiobiotin synthetase BioD (211 aa).

ATP is bound at residue 13–18 (GVGKTV). Thr-17 is a Mg(2+) binding site. Lys-33 is an active-site residue. Mg(2+) is bound by residues Cys-47 and Glu-101. ATP-binding positions include 101-104 (EGAG), 185-187 (PWL), and Asn-192.

It belongs to the dethiobiotin synthetase family. As to quaternary structure, homodimer. Mg(2+) serves as cofactor.

The protein resides in the cytoplasm. The enzyme catalyses (7R,8S)-7,8-diammoniononanoate + CO2 + ATP = (4R,5S)-dethiobiotin + ADP + phosphate + 3 H(+). Its pathway is cofactor biosynthesis; biotin biosynthesis; biotin from 7,8-diaminononanoate: step 1/2. Catalyzes a mechanistically unusual reaction, the ATP-dependent insertion of CO2 between the N7 and N8 nitrogen atoms of 7,8-diaminopelargonic acid (DAPA, also called 7,8-diammoniononanoate) to form a ureido ring. This chain is ATP-dependent dethiobiotin synthetase BioD, found in Bradyrhizobium diazoefficiens (strain JCM 10833 / BCRC 13528 / IAM 13628 / NBRC 14792 / USDA 110).